Here is a 302-residue protein sequence, read N- to C-terminus: Probable alpha-L-glutamate ligase (302 aa).

The region spanning M104 to E287 is the ATP-grasp domain. Residues K141, E178–F179, D187, and R211–N213 each bind ATP. The Mg(2+) site is built by D248, E260, and N262. Mn(2+) contacts are provided by D248, E260, and N262.

The protein belongs to the RimK family. Mg(2+) is required as a cofactor. The cofactor is Mn(2+).

The sequence is that of Probable alpha-L-glutamate ligase from Halorhodospira halophila (strain DSM 244 / SL1) (Ectothiorhodospira halophila (strain DSM 244 / SL1)).